Reading from the N-terminus, the 395-residue chain is MDEEPERTKRWEGGYERTWEILKEDESGSLKATIEDILFKAKRKRVFEHHGQVRLGMMRHLYVVVDGSRTMEDQDLKPNRLTCTLKLLEYFVEEYFDQNPISQIGIIVTKSKRAEKLTELSGNPRKHITSLKKAVDMTCHGEPSLYNSLSIAMQTLKHMPGHTSREVLIIFSSLTTCDPSNIYDLIKTLKAAKIRVSVIGLSAEVRVCTVLARETGGTYHVILDESHYKELLTHHVSPPPASSSSECSLIRMGFPQHTIASLSDQDAKPSFSMAHLDGNTEPGLTLGGYFCPQCRAKYCELPVECKICGLTLVSAPHLARSYHHLFPLDAFQEIPLEEYNGERFCYGCQGELKDQHVYVCAVCQNVFCVDCDVFVHDSLHCCPGCIHKIPAPSGV.

Residues 60–236 (HLYVVVDGSR…HYKELLTHHV (177 aa)) enclose the VWFA domain. Tyrosine 95 carries the post-translational modification Phosphotyrosine. The C4-type zinc finger occupies 291–308 (CPQCRAKYCELPVECKIC).

The protein belongs to the GTF2H2 family. In terms of assembly, component of the TFIID-containing RNA polymerase II pre-initiation complex that is composed of TBP and at least GTF2A1, GTF2A2, GTF2E1, GTF2E2, GTF2F1, GTF2H2, GTF2H3, GTF2H4, GTF2H5, GTF2B, TCEA1, ERCC2 and ERCC3. Component of the 7-subunit TFIIH core complex composed of XPB/ERCC3, XPD/ERCC2, GTF2H1, GTF2H2, GTF2H3, GTF2H4 and GTF2H5, which is active in NER. The core complex associates with the 3-subunit CDK-activating kinase (CAK) module composed of CCNH/cyclin H, CDK7 and MNAT1 to form the 10-subunit holoenzyme (holo-TFIIH) active in transcription. Interacts with XPB, XPD, GTF2H1 and GTF2H3. As to quaternary structure, (Microbial infection) Interacts with varicella-zoster virus IE63 protein. As to expression, widely expressed, with higher expression in skeletal muscle.

The protein localises to the nucleus. Component of the general transcription and DNA repair factor IIH (TFIIH) core complex, which is involved in general and transcription-coupled nucleotide excision repair (NER) of damaged DNA and, when complexed to CAK, in RNA transcription by RNA polymerase II. In NER, TFIIH acts by opening DNA around the lesion to allow the excision of the damaged oligonucleotide and its replacement by a new DNA fragment. In transcription, TFIIH has an essential role in transcription initiation. When the pre-initiation complex (PIC) has been established, TFIIH is required for promoter opening and promoter escape. Phosphorylation of the C-terminal tail (CTD) of the largest subunit of RNA polymerase II by the kinase module CAK controls the initiation of transcription. The N-terminus of GTF2H2 interacts with and regulates XPD whereas an intact C-terminus is required for a successful escape of RNAP II form the promoter. This is General transcription factor IIH subunit 2 (GTF2H2) from Homo sapiens (Human).